The primary structure comprises 375 residues: Cobalt-precorrin-5B C(1)-methyltransferase (375 aa).

This sequence belongs to the CbiD family.

It catalyses the reaction Co-precorrin-5B + S-adenosyl-L-methionine = Co-precorrin-6A + S-adenosyl-L-homocysteine. It participates in cofactor biosynthesis; adenosylcobalamin biosynthesis; cob(II)yrinate a,c-diamide from sirohydrochlorin (anaerobic route): step 6/10. Its function is as follows. Catalyzes the methylation of C-1 in cobalt-precorrin-5B to form cobalt-precorrin-6A. The protein is Cobalt-precorrin-5B C(1)-methyltransferase of Fusobacterium nucleatum subsp. nucleatum (strain ATCC 25586 / DSM 15643 / BCRC 10681 / CIP 101130 / JCM 8532 / KCTC 2640 / LMG 13131 / VPI 4355).